A 405-amino-acid chain; its full sequence is Exodeoxyribonuclease 7 large subunit (405 aa).

The protein belongs to the XseA family. As to quaternary structure, heterooligomer composed of large and small subunits.

The protein resides in the cytoplasm. It catalyses the reaction Exonucleolytic cleavage in either 5'- to 3'- or 3'- to 5'-direction to yield nucleoside 5'-phosphates.. Bidirectionally degrades single-stranded DNA into large acid-insoluble oligonucleotides, which are then degraded further into small acid-soluble oligonucleotides. The sequence is that of Exodeoxyribonuclease 7 large subunit from Halothermothrix orenii (strain H 168 / OCM 544 / DSM 9562).